A 136-amino-acid polypeptide reads, in one-letter code: uncharacterized protein (136 aa).

This is an uncharacterized protein from Enterobacteria phage T4 (Bacteriophage T4).